Consider the following 99-residue polypeptide: Aspartyl/glutamyl-tRNA(Asn/Gln) amidotransferase subunit C (99 aa).

The protein belongs to the GatC family. In terms of assembly, heterotrimer of A, B and C subunits.

The enzyme catalyses L-glutamyl-tRNA(Gln) + L-glutamine + ATP + H2O = L-glutaminyl-tRNA(Gln) + L-glutamate + ADP + phosphate + H(+). It carries out the reaction L-aspartyl-tRNA(Asn) + L-glutamine + ATP + H2O = L-asparaginyl-tRNA(Asn) + L-glutamate + ADP + phosphate + 2 H(+). Functionally, allows the formation of correctly charged Asn-tRNA(Asn) or Gln-tRNA(Gln) through the transamidation of misacylated Asp-tRNA(Asn) or Glu-tRNA(Gln) in organisms which lack either or both of asparaginyl-tRNA or glutaminyl-tRNA synthetases. The reaction takes place in the presence of glutamine and ATP through an activated phospho-Asp-tRNA(Asn) or phospho-Glu-tRNA(Gln). In Polaromonas sp. (strain JS666 / ATCC BAA-500), this protein is Aspartyl/glutamyl-tRNA(Asn/Gln) amidotransferase subunit C.